A 278-amino-acid polypeptide reads, in one-letter code: HTH-type transcriptional activator RhaS (278 aa).

Residues Asn-174–Gly-272 enclose the HTH araC/xylS-type domain. 2 consecutive DNA-binding regions (H-T-H motif) follow at residues Asp-191 to Thr-212 and Val-239 to Phe-262.

In terms of assembly, binds DNA as a dimer.

It is found in the cytoplasm. Its function is as follows. Activates expression of the rhaBAD and rhaT operons. The sequence is that of HTH-type transcriptional activator RhaS from Escherichia coli O81 (strain ED1a).